A 1411-amino-acid polypeptide reads, in one-letter code: DNA-directed RNA polymerase subunit beta' (1411 aa).

Cys69, Cys71, Cys84, and Cys87 together coordinate Zn(2+). Residues Asp461, Asp463, and Asp465 each contribute to the Mg(2+) site. 4 residues coordinate Zn(2+): Cys809, Cys883, Cys890, and Cys893.

It belongs to the RNA polymerase beta' chain family. The RNAP catalytic core consists of 2 alpha, 1 beta, 1 beta' and 1 omega subunit. When a sigma factor is associated with the core the holoenzyme is formed, which can initiate transcription. Requires Mg(2+) as cofactor. Zn(2+) serves as cofactor.

The catalysed reaction is RNA(n) + a ribonucleoside 5'-triphosphate = RNA(n+1) + diphosphate. Functionally, DNA-dependent RNA polymerase catalyzes the transcription of DNA into RNA using the four ribonucleoside triphosphates as substrates. This Ehrlichia ruminantium (strain Welgevonden) protein is DNA-directed RNA polymerase subunit beta'.